Consider the following 556-residue polypeptide: (-)-alpha-pinene synthase (556 aa).

The Mg(2+) site is built by aspartate 309, aspartate 313, aspartate 453, and glutamate 461. A DDXXD motif motif is present at residues 309–313 (DDMYD).

Belongs to the terpene synthase family. Tpsa subfamily. The cofactor is Mg(2+). It depends on Mn(2+) as a cofactor. In terms of tissue distribution, expressed in ripe fruits and roots. Not detected in vegetative tissues.

Its subcellular location is the cytoplasm. The protein resides in the cytosol. The enzyme catalyses (2E)-geranyl diphosphate = (1S,5S)-alpha-pinene + diphosphate. The protein operates within secondary metabolite biosynthesis; terpenoid biosynthesis. Monoterpene synthase catalyzing the production of (-)-alpha-pinene, beta-phellandrene and beta-myrcene as the major products. Unable to use farnesyl diphosphate as substrate. Exclusively expressed in the fruit of wild strawberries. Not detected in cultivated varieties. This is (-)-alpha-pinene synthase from Fragaria vesca (Woodland strawberry).